A 509-amino-acid chain; its full sequence is Coiled-coil domain-containing protein 181 (509 aa).

Disordered stretches follow at residues 1 to 122 and 237 to 369; these read MDED…EDEE and FLPP…EKKK. Basic and acidic residues-rich tracts occupy residues 22 to 33 and 41 to 56; these read DLEWLINDKEKS and ACKKEDDLDQVLKENE. Residues 60–69 show a composition bias toward polar residues; that stretch reads ELGQQLSDPD. 2 stretches are compositionally biased toward basic and acidic residues: residues 70–82 and 266–275; these read NSPKDEALPRRND and IKKEESEAKG. Polar residues predominate over residues 319–333; that stretch reads RIQSAGVSPVTSTYC. Coiled-coil stretches lie at residues 335–377 and 418–488; these read SPRQ…VFKA and LKKK…RSKQ. Basic and acidic residues predominate over residues 337-369; that stretch reads RQKELQKQLERKREKLKREEEQRKLEEENEKKK.

Belongs to the CCDC181 family. As to quaternary structure, homodimer. Interacts with HOOK1. Interacts with HOOK2. Interacts with HOOK3. In terms of tissue distribution, predominantly expressed in testis. Expressed at lower level in brain, eye, trachea and lung. Barely expressed in tongue, heart, liver, kidney, spleen and muscle. Present at high level in elongating spermatids, whereas lower levels are observed in round spermatids (at protein level).

It localises to the cytoplasm. The protein localises to the cytoskeleton. It is found in the cell projection. Its subcellular location is the cilium. The protein resides in the flagellum. Microtubule-binding protein that localizes to the microtubular manchette of elongating spermatids. This Mus musculus (Mouse) protein is Coiled-coil domain-containing protein 181.